The chain runs to 259 residues: 3-deoxy-manno-octulosonate cytidylyltransferase (259 aa).

This sequence belongs to the KdsB family.

It localises to the cytoplasm. The enzyme catalyses 3-deoxy-alpha-D-manno-oct-2-ulosonate + CTP = CMP-3-deoxy-beta-D-manno-octulosonate + diphosphate. The protein operates within nucleotide-sugar biosynthesis; CMP-3-deoxy-D-manno-octulosonate biosynthesis; CMP-3-deoxy-D-manno-octulosonate from 3-deoxy-D-manno-octulosonate and CTP: step 1/1. Its pathway is bacterial outer membrane biogenesis; lipopolysaccharide biosynthesis. Activates KDO (a required 8-carbon sugar) for incorporation into bacterial lipopolysaccharide in Gram-negative bacteria. This chain is 3-deoxy-manno-octulosonate cytidylyltransferase, found in Actinobacillus succinogenes (strain ATCC 55618 / DSM 22257 / CCUG 43843 / 130Z).